The primary structure comprises 701 residues: Interleukin-1 receptor accessory protein-like 1-A (701 aa).

The first 19 residues, 1–19 (MTALNPVLFLLCGVSVSLS), serve as a signal peptide directing secretion. At 20-361 (LKVVSKRGSV…IGKRVELMYT (342 aa)) the chain is on the extracellular side. The 101-residue stretch at 33–133 (TDWSVDYLKY…RNSTFCMKVS (101 aa)) folds into the Ig-like C2-type 1 domain. Cys-54 and Cys-121 are joined by a disulfide. N-linked (GlcNAc...) asparagine glycans are attached at residues Asn-64, Asn-125, Asn-141, Asn-216, Asn-267, and Asn-334. 2 Ig-like C2-type domains span residues 146-235 (CYNS…TYLS) and 245-353 (PRIL…VQIG). A disulfide bridge links Cys-167 with Cys-219. A disulfide bridge connects residues Cys-270 and Cys-337. The helical transmembrane segment at 362-382 (VELAGGLGAILLLLALLLSVY) threads the bilayer. The Cytoplasmic portion of the chain corresponds to 383–701 (KCYRIELLLC…RETSISSVIW (319 aa)). The TIR domain maps to 407–563 (KEYDAYLSYS…RFWKQLRYTM (157 aa)). The active site involves Glu-495. Residues 568–701 (PQQTITNHAL…RETSISSVIW (134 aa)) are required for synaptic vesicle accumulation during synaptogenesis.

The protein belongs to the interleukin-1 receptor family.

It localises to the cell membrane. The protein resides in the cytoplasm. The enzyme catalyses NAD(+) + H2O = ADP-D-ribose + nicotinamide + H(+). In terms of biological role, may regulate secretion and presynaptic differentiation through inhibition of the activity of N-type voltage-gated calcium channel. During presynaptic differentiation may regulate both synaptic vesicle accumulation in axon terminals and subsequent axon terminal remodeling. This Danio rerio (Zebrafish) protein is Interleukin-1 receptor accessory protein-like 1-A (il1rapl1a).